Reading from the N-terminus, the 142-residue chain is Nitrogen fixation protein NifU 2 (142 aa).

A disordered region spans residues 1–36 (MKDLFDESLTLDTGSAAPGTAPGRPRRRQPAGGKAP). Residues 14–23 (GSAAPGTAPG) show a composition bias toward low complexity.

The protein belongs to the NifU family.

Functionally, may be involved in the formation or repair of [Fe-S] clusters present in iron-sulfur proteins. This is Nitrogen fixation protein NifU 2 (nifU2) from Rhodobacter capsulatus (Rhodopseudomonas capsulata).